The chain runs to 493 residues: Putative glycerol-3-phosphate transporter 5 (493 aa).

12 helical membrane-spanning segments follow: residues 25–44, 83–103, 113–133, 145–165, 185–205, 207–227, 292–312, 328–348, 352–372, 375–395, 428–448, and 452–472; these read FTFH…ASFH, LGEL…FAGH, FLVF…LGYW, VQIV…SVVG, SVGN…GWGW, FVLP…FLVV, FCLF…PYYL, GILS…AGFI, IKAR…ALIM, VYGS…GLLV, AIID…AGYI, and GWNS…LFLV.

The protein belongs to the major facilitator superfamily. Organophosphate:Pi antiporter (OPA) (TC 2.A.1.4) family.

It is found in the membrane. This chain is Putative glycerol-3-phosphate transporter 5, found in Arabidopsis thaliana (Mouse-ear cress).